The primary structure comprises 973 residues: ATP-dependent DNA helicase Q5 (973 aa).

Residues Met39–Val213 form the Helicase ATP-binding domain. Residue Met52–Ser59 participates in ATP binding. The DEAH box motif lies at Asp157–His160. Residues Asn241 to Leu398 enclose the Helicase C-terminal domain. Zn(2+) is bound by residues Cys412, Cys428, Cys432, and Cys435. Phosphoserine is present on residues Ser489 and Ser492. The interval Gly491 to Met621 is interaction with POLR2A. 3 disordered regions span residues Gly518–Ala538, Thr679–Lys795, and Cys822–Pro884. Residue Thr527 is modified to Phosphothreonine. The tract at residues Pro653 to Asp726 is interaction with RAD51. Position 728 is a phosphoserine; by CDK1 (Ser728). Positions Thr840 to Arg856 are enriched in basic and acidic residues. Positions Pro863–Asn878 are enriched in polar residues.

It belongs to the helicase family. RecQ subfamily. Monomer. Interacts with TOP2A, TOP3A and TOP3B. Interacts with RNA polymerase II subunit POLR2A. Identified in a complex with the RNA polymerase II core bound to DNA. Interacts with RAD51. Interacts with WRN; this interaction stimulates WRN helicase activity on DNA fork duplexes. Interacts with MUS1; this interaction promotes MUS81-dependent mitotic DNA synthesis. Zn(2+) serves as cofactor. Post-translationally, phosphorylated by CDK1 at Ser-728; this phosphorylation is required for RECQL5-mediated disruption of RAD51 filaments on stalled replication forks.

The protein localises to the nucleus. Its subcellular location is the nucleoplasm. The enzyme catalyses Couples ATP hydrolysis with the unwinding of duplex DNA by translocating in the 3'-5' direction.. It catalyses the reaction ATP + H2O = ADP + phosphate + H(+). DNA helicase that plays an important role in DNA replication, transcription and repair. Binds to the RNA polymerase II subunit POLR2A during transcription elongation and suppresses transcription-associated genomic instability. Also associates with POLR1A and enforces the stability of ribosomal DNA arrays. Plays an important role in mitotic chromosome separation after cross-over events and cell cycle progress. Mechanistically, removes RAD51 filaments protecting stalled replication forks at common fragile sites and stimulates MUS81-EME1 endonuclease leading to mitotic DNA synthesis. Required for efficient DNA repair, including repair of inter-strand cross-links. Stimulates DNA decatenation mediated by TOP2A. Prevents sister chromatid exchange and homologous recombination. In Rattus norvegicus (Rat), this protein is ATP-dependent DNA helicase Q5 (Recql5).